A 133-amino-acid chain; its full sequence is Peptide methionine sulfoxide reductase MsrB (133 aa).

Over residues 1 to 12 the composition is skewed to basic and acidic residues; it reads MSEKVQKSEHEW. A disordered region spans residues 1–36; it reads MSEKVQKSEHEWQQQLTPEQYRVTREKGTERPFTGD. One can recognise a MsrB domain in the interval 9-132; that stretch reads EHEWQQQLTP…NSVSLDFHPG (124 aa). Zn(2+) contacts are provided by C48, C51, C97, and C100. C121 (nucleophile) is an active-site residue.

This sequence belongs to the MsrB Met sulfoxide reductase family. Zn(2+) serves as cofactor.

The enzyme catalyses L-methionyl-[protein] + [thioredoxin]-disulfide + H2O = L-methionyl-(R)-S-oxide-[protein] + [thioredoxin]-dithiol. The sequence is that of Peptide methionine sulfoxide reductase MsrB from Chromohalobacter salexigens (strain ATCC BAA-138 / DSM 3043 / CIP 106854 / NCIMB 13768 / 1H11).